The primary structure comprises 114 residues: Aspartate 1-decarboxylase (114 aa).

The active-site Schiff-base intermediate with substrate; via pyruvic acid is Ser25. At Ser25 the chain carries Pyruvic acid (Ser). Thr57 contacts substrate. Tyr58 (proton donor) is an active-site residue. 73 to 75 (GAA) contacts substrate.

Belongs to the PanD family. In terms of assembly, heterooctamer of four alpha and four beta subunits. It depends on pyruvate as a cofactor. In terms of processing, is synthesized initially as an inactive proenzyme, which is activated by self-cleavage at a specific serine bond to produce a beta-subunit with a hydroxyl group at its C-terminus and an alpha-subunit with a pyruvoyl group at its N-terminus.

Its subcellular location is the cytoplasm. The enzyme catalyses L-aspartate + H(+) = beta-alanine + CO2. The protein operates within cofactor biosynthesis; (R)-pantothenate biosynthesis; beta-alanine from L-aspartate: step 1/1. Catalyzes the pyruvoyl-dependent decarboxylation of aspartate to produce beta-alanine. This is Aspartate 1-decarboxylase from Thermotoga petrophila (strain ATCC BAA-488 / DSM 13995 / JCM 10881 / RKU-1).